An 81-amino-acid polypeptide reads, in one-letter code: MNPLIAAASVIAAGLAVGLASIGPGVGQGTAAGQAVEGIARQPEAEDKIRGTLLLSLAFMEALTIYGLVVALALLFANPFV.

2 helical membrane-spanning segments follow: residues 3 to 23 and 57 to 77; these read PLIAAASVIAAGLAVGLASIG and LAFMEALTIYGLVVALALLFA.

This sequence belongs to the ATPase C chain family. As to quaternary structure, F-type ATPases have 2 components, F(1) - the catalytic core - and F(0) - the membrane proton channel. F(1) has five subunits: alpha(3), beta(3), gamma(1), delta(1), epsilon(1). F(0) has four main subunits: a(1), b(1), b'(1) and c(10-14). The alpha and beta chains form an alternating ring which encloses part of the gamma chain. F(1) is attached to F(0) by a central stalk formed by the gamma and epsilon chains, while a peripheral stalk is formed by the delta, b and b' chains.

Its subcellular location is the plastid. The protein localises to the chloroplast thylakoid membrane. In terms of biological role, f(1)F(0) ATP synthase produces ATP from ADP in the presence of a proton or sodium gradient. F-type ATPases consist of two structural domains, F(1) containing the extramembraneous catalytic core and F(0) containing the membrane proton channel, linked together by a central stalk and a peripheral stalk. During catalysis, ATP synthesis in the catalytic domain of F(1) is coupled via a rotary mechanism of the central stalk subunits to proton translocation. Key component of the F(0) channel; it plays a direct role in translocation across the membrane. A homomeric c-ring of between 10-14 subunits forms the central stalk rotor element with the F(1) delta and epsilon subunits. This is ATP synthase subunit c, chloroplastic from Pisum sativum (Garden pea).